The primary structure comprises 598 residues: Elongation factor 4 (598 aa).

Positions S4 to E186 constitute a tr-type G domain. Residues D16–T21 and N133–D136 contribute to the GTP site.

This sequence belongs to the TRAFAC class translation factor GTPase superfamily. Classic translation factor GTPase family. LepA subfamily.

It is found in the cell inner membrane. The catalysed reaction is GTP + H2O = GDP + phosphate + H(+). Required for accurate and efficient protein synthesis under certain stress conditions. May act as a fidelity factor of the translation reaction, by catalyzing a one-codon backward translocation of tRNAs on improperly translocated ribosomes. Back-translocation proceeds from a post-translocation (POST) complex to a pre-translocation (PRE) complex, thus giving elongation factor G a second chance to translocate the tRNAs correctly. Binds to ribosomes in a GTP-dependent manner. In Alteromonas mediterranea (strain DSM 17117 / CIP 110805 / LMG 28347 / Deep ecotype), this protein is Elongation factor 4.